The following is a 91-amino-acid chain: Islet amyloid polypeptide (91 aa).

The first 22 residues, 1 to 22 (MGILKLPVVLIVLCVALNHLEG), serve as a signal peptide directing secretion. Residues 23–33 (GGKPTESHQME) constitute a propeptide that is removed on maturation. Cys37 and Cys42 are joined by a disulfide. Residue Tyr72 is modified to Tyrosine amide. Positions 78–91 (VEILKREPLSYLPI) are excised as a propeptide.

This sequence belongs to the calcitonin family. In terms of assembly, can form homodimers. Interacts with IDE and INS. Interaction with INS inhibits homodimerization and fibril formation.

The protein resides in the secreted. Amylin/IAPP is a glucoregulatory peptide hormone that plays an important role in the regulation of energy homeostasis. Selectively inhibits insulin-stimulated glucose utilization and glycogen deposition in muscle, while not affecting adipocyte glucose metabolism. IAPP function is mediated by the CALCR-RAMPs (AMYRs) receptor complexes. Amylin can also bind CALCR receptor in the absence of RAMPs, although it is more selective for AMYRs. This chain is Islet amyloid polypeptide (IAPP), found in Bos taurus (Bovine).